The following is a 352-amino-acid chain: Molybdenum import ATP-binding protein ModC (352 aa).

The 229-residue stretch at 1 to 229 (MLELNFSQTL…SVMNPWLPKE (229 aa)) folds into the ABC transporter domain. 31–38 (GVSGAGKT) is an ATP binding site. Residues 289–352 (QTSIRNVLRA…AQIKSVSITA (64 aa)) enclose the Mop domain.

It belongs to the ABC transporter superfamily. Molybdate importer (TC 3.A.1.8) family. The complex is composed of two ATP-binding proteins (ModC), two transmembrane proteins (ModB) and a solute-binding protein (ModA).

The protein localises to the cell inner membrane. It catalyses the reaction molybdate(out) + ATP + H2O = molybdate(in) + ADP + phosphate + H(+). Functionally, part of the ABC transporter complex ModABC involved in molybdenum import. Responsible for energy coupling to the transport system. This Escherichia coli O6:K15:H31 (strain 536 / UPEC) protein is Molybdenum import ATP-binding protein ModC.